Reading from the N-terminus, the 1171-residue chain is DExH-box ATP-dependent RNA helicase DExH15 chloroplastic (1171 aa).

A chloroplast-targeting transit peptide spans 1–58; that stretch reads MNTLPVVSLTASSSFKFFHFPSLHRSLSHSPNFSFTKSLILNPNHLSFKSTLNSLSPS. Polar residues predominate over residues 53–62; it reads NSLSPSQSQL. The interval 53–111 is disordered; it reads NSLSPSQSQLYEEEDDEEEEEEDEDDDDEAADEYDNISDEIRNSDDDDDDEETEFSVDL. 2 stretches are compositionally biased toward acidic residues: residues 63 to 90 and 97 to 107; these read YEEEDDEEEEEEDEDDDDEAADEYDNIS and DDDDDDEETEF. The 165-residue stretch at 163 to 327 folds into the Helicase ATP-binding domain; that stretch reads IEAFLRGSSV…WIGEIHGKTE (165 aa). 176–183 contributes to the ATP binding site; it reads APTSSGKT. Positions 275–278 match the DEVH box motif; that stretch reads DEVH. A Helicase C-terminal domain is found at 424–620; that stretch reads QISDTLWHLQ…ASYGMVLNLV (197 aa).

Belongs to the DExH box helicase family.

Its subcellular location is the plastid. The protein localises to the chloroplast. It is found in the cytoplasmic granule. The enzyme catalyses ATP + H2O = ADP + phosphate + H(+). Functionally, RNA helicase involved in group II intron splicing. Essential protein required during embryogenesis. Involved in post-transcriptional gene silencing. Modulates the determination of cell fate. Necessary for normal plasmodesmata (PD) development and aperture regulation. This chain is DExH-box ATP-dependent RNA helicase DExH15 chloroplastic (ISE2), found in Arabidopsis thaliana (Mouse-ear cress).